The sequence spans 247 residues: Cytochrome c oxidase subunit 2 (247 aa).

Topologically, residues 1–38 (MKEMMMSNMFNDVPTPWAMFFQDSATPNMEGMLELHNN) are mitochondrial intermembrane. Residues 39 to 58 (VVFYLCMMLGFVTFMLYNML) form a helical membrane-spanning segment. Over 59 to 78 (TTYNKSVMPYKYLNQGQFME) the chain is Mitochondrial matrix. The helical transmembrane segment at 79–103 (MMWTTLPAVMLLMIAFPSFILLYMC) threads the bilayer. Topologically, residues 104-247 (DEVMAPAMTI…ADFLAWIDEQ (144 aa)) are mitochondrial intermembrane. Cu cation is bound by residues His182, Cys217, Glu219, Cys221, His225, and Met228. Residue Glu219 coordinates Mg(2+).

The protein belongs to the cytochrome c oxidase subunit 2 family. In terms of assembly, component of the cytochrome c oxidase (complex IV, CIV), a multisubunit enzyme composed of a catalytic core of 3 subunits and several supernumerary subunits. The complex exists as a monomer or a dimer and forms supercomplexes (SCs) in the inner mitochondrial membrane with ubiquinol-cytochrome c oxidoreductase (cytochrome b-c1 complex, complex III, CIII). Cu cation serves as cofactor.

The protein resides in the mitochondrion inner membrane. It carries out the reaction 4 Fe(II)-[cytochrome c] + O2 + 8 H(+)(in) = 4 Fe(III)-[cytochrome c] + 2 H2O + 4 H(+)(out). Functionally, component of the cytochrome c oxidase, the last enzyme in the mitochondrial electron transport chain which drives oxidative phosphorylation. The respiratory chain contains 3 multisubunit complexes succinate dehydrogenase (complex II, CII), ubiquinol-cytochrome c oxidoreductase (cytochrome b-c1 complex, complex III, CIII) and cytochrome c oxidase (complex IV, CIV), that cooperate to transfer electrons derived from NADH and succinate to molecular oxygen, creating an electrochemical gradient over the inner membrane that drives transmembrane transport and the ATP synthase. Cytochrome c oxidase is the component of the respiratory chain that catalyzes the reduction of oxygen to water. Electrons originating from reduced cytochrome c in the intermembrane space (IMS) are transferred via the dinuclear copper A center (CU(A)) of subunit 2 and heme A of subunit 1 to the active site in subunit 1, a binuclear center (BNC) formed by heme A3 and copper B (CU(B)). The BNC reduces molecular oxygen to 2 water molecules using 4 electrons from cytochrome c in the IMS and 4 protons from the mitochondrial matrix. The protein is Cytochrome c oxidase subunit 2 (COX2) of Brettanomyces custersianus (Yeast).